Consider the following 194-residue polypeptide: Fe/S biogenesis protein NfuA (194 aa).

The [4Fe-4S] cluster site is built by cysteine 151 and cysteine 154.

It belongs to the NfuA family. Homodimer. Requires [4Fe-4S] cluster as cofactor.

Functionally, involved in iron-sulfur cluster biogenesis. Binds a 4Fe-4S cluster, can transfer this cluster to apoproteins, and thereby intervenes in the maturation of Fe/S proteins. Could also act as a scaffold/chaperone for damaged Fe/S proteins. This is Fe/S biogenesis protein NfuA from Photobacterium profundum (strain SS9).